The sequence spans 387 residues: 3-ketoacyl-CoA thiolase (387 aa).

Cys-91 acts as the Acyl-thioester intermediate in catalysis. Catalysis depends on proton acceptor residues His-343 and Cys-373.

This sequence belongs to the thiolase-like superfamily. Thiolase family. As to quaternary structure, heterotetramer of two alpha chains (FadB) and two beta chains (FadA).

It is found in the cytoplasm. It catalyses the reaction an acyl-CoA + acetyl-CoA = a 3-oxoacyl-CoA + CoA. The protein operates within lipid metabolism; fatty acid beta-oxidation. Catalyzes the final step of fatty acid oxidation in which acetyl-CoA is released and the CoA ester of a fatty acid two carbons shorter is formed. The protein is 3-ketoacyl-CoA thiolase of Idiomarina loihiensis (strain ATCC BAA-735 / DSM 15497 / L2-TR).